Consider the following 638-residue polypeptide: uncharacterized protein (638 aa).

This is an uncharacterized protein from Homo sapiens (Human).